Consider the following 376-residue polypeptide: 1-deoxy-D-xylulose 5-phosphate reductoisomerase (376 aa).

Positions 12, 13, 14, 15, 39, and 116 each coordinate NADPH. Lysine 117 contacts 1-deoxy-D-xylulose 5-phosphate. Glutamate 118 serves as a coordination point for NADPH. Aspartate 142 provides a ligand contact to Mn(2+). 1-deoxy-D-xylulose 5-phosphate is bound by residues serine 143, glutamate 144, serine 164, and histidine 187. Glutamate 144 contributes to the Mn(2+) binding site. Residue glycine 193 participates in NADPH binding. Positions 200, 205, 206, and 209 each coordinate 1-deoxy-D-xylulose 5-phosphate. Glutamate 209 contacts Mn(2+).

This sequence belongs to the DXR family. It depends on Mg(2+) as a cofactor. Requires Mn(2+) as cofactor.

It carries out the reaction 2-C-methyl-D-erythritol 4-phosphate + NADP(+) = 1-deoxy-D-xylulose 5-phosphate + NADPH + H(+). It functions in the pathway isoprenoid biosynthesis; isopentenyl diphosphate biosynthesis via DXP pathway; isopentenyl diphosphate from 1-deoxy-D-xylulose 5-phosphate: step 1/6. In terms of biological role, catalyzes the NADPH-dependent rearrangement and reduction of 1-deoxy-D-xylulose-5-phosphate (DXP) to 2-C-methyl-D-erythritol 4-phosphate (MEP). In Thermotoga maritima (strain ATCC 43589 / DSM 3109 / JCM 10099 / NBRC 100826 / MSB8), this protein is 1-deoxy-D-xylulose 5-phosphate reductoisomerase.